A 269-amino-acid chain; its full sequence is Cytochrome c oxidase subunit 3 (269 aa).

7 helical membrane-spanning segments follow: residues 19-39, 44-64, 87-107, 135-155, 170-190, 205-225, and 247-267; these read PWPFFLSVVLFFNCLAATLYL, HSSVFFGISFLGLLATMYLWF, IGFMLFLISETFLFASIFWAF, LEVPLLNTVILLTSGASLTYA, GLYMTIALSFLFLGGQAYEYW, FYFATGLHGIHIIVGTILLLA, and IYYWHFCDVVWLFLYLTIYIW.

The protein belongs to the cytochrome c oxidase subunit 3 family. In terms of assembly, component of the cytochrome c oxidase (complex IV, CIV), a multisubunit enzyme composed of a catalytic core of 3 subunits and several supernumerary subunits. The complex exists as a monomer or a dimer and forms supercomplexes (SCs) in the inner mitochondrial membrane with ubiquinol-cytochrome c oxidoreductase (cytochrome b-c1 complex, complex III, CIII).

It is found in the mitochondrion inner membrane. It carries out the reaction 4 Fe(II)-[cytochrome c] + O2 + 8 H(+)(in) = 4 Fe(III)-[cytochrome c] + 2 H2O + 4 H(+)(out). Functionally, component of the cytochrome c oxidase, the last enzyme in the mitochondrial electron transport chain which drives oxidative phosphorylation. The respiratory chain contains 3 multisubunit complexes succinate dehydrogenase (complex II, CII), ubiquinol-cytochrome c oxidoreductase (cytochrome b-c1 complex, complex III, CIII) and cytochrome c oxidase (complex IV, CIV), that cooperate to transfer electrons derived from NADH and succinate to molecular oxygen, creating an electrochemical gradient over the inner membrane that drives transmembrane transport and the ATP synthase. Cytochrome c oxidase is the component of the respiratory chain that catalyzes the reduction of oxygen to water. Electrons originating from reduced cytochrome c in the intermembrane space (IMS) are transferred via the dinuclear copper A center (CU(A)) of subunit 2 and heme A of subunit 1 to the active site in subunit 1, a binuclear center (BNC) formed by heme A3 and copper B (CU(B)). The BNC reduces molecular oxygen to 2 water molecules using 4 electrons from cytochrome c in the IMS and 4 protons from the mitochondrial matrix. The protein is Cytochrome c oxidase subunit 3 (cox3) of Schizosaccharomyces pombe (strain 972 / ATCC 24843) (Fission yeast).